Here is a 479-residue protein sequence, read N- to C-terminus: Ribosomal RNA small subunit methyltransferase F (479 aa).

Residues 125–131 (AAAPGSK), glutamate 149, aspartate 176, and aspartate 194 contribute to the S-adenosyl-L-methionine site. The Nucleophile role is filled by cysteine 247.

Belongs to the class I-like SAM-binding methyltransferase superfamily. RsmB/NOP family.

The protein localises to the cytoplasm. It carries out the reaction cytidine(1407) in 16S rRNA + S-adenosyl-L-methionine = 5-methylcytidine(1407) in 16S rRNA + S-adenosyl-L-homocysteine + H(+). Specifically methylates the cytosine at position 1407 (m5C1407) of 16S rRNA. The chain is Ribosomal RNA small subunit methyltransferase F from Escherichia coli O139:H28 (strain E24377A / ETEC).